The chain runs to 84 residues: Three-finger toxin MALT0070C (84 aa).

The first 21 residues, 1–21, serve as a signal peptide directing secretion; sequence MKTLLLTLVVVTIVCLDLGYT. 4 disulfides stabilise this stretch: Cys-24-Cys-43, Cys-36-Cys-60, Cys-64-Cys-71, and Cys-72-Cys-77.

This sequence belongs to the three-finger toxin family. Short-chain subfamily. Expressed by the venom gland.

It localises to the secreted. This Micrurus altirostris (Uruguayan coral snake) protein is Three-finger toxin MALT0070C.